The chain runs to 370 residues: E3 ubiquitin-protein ligase E3D (370 aa).

Alanine 2 is subject to N-acetylalanine. A BRAT1-like motif motif is present at residues 129-159 (PLPSENWSALVGEWCCHPDPFANKPLHPREN). A Zn(2+)-binding site is contributed by cysteine 144. Residues 214–236 (QPSEGSFPNIPRSQFVQSVIARC) form an interaction with UBE2C region. An HECT-like region spans residues 332 to 368 (LPSTTCLELLLILSRNNASLPLSLRQMNSFQLWCSHC).

As to quaternary structure, interacts with UBE2C/UbcH10 (E2 ubiquitin-conjugating enzyme). In vitro, interacts with cyclin-B. In terms of processing, ubiquitinated by UBCH10 (E2 ubiquitin-conjugating enzyme).

The protein localises to the cytoplasm. It catalyses the reaction S-ubiquitinyl-[E2 ubiquitin-conjugating enzyme]-L-cysteine + [acceptor protein]-L-lysine = [E2 ubiquitin-conjugating enzyme]-L-cysteine + N(6)-ubiquitinyl-[acceptor protein]-L-lysine.. It functions in the pathway protein modification; protein ubiquitination. E3 ubiquitin-protein ligase which accepts ubiquitin from specific E2 ubiquitin-conjugating enzymes, and transfers it to substrates, generally promoting their degradation by the proteasome. Independently of its E3 ubiquitin-protein ligase activity, acts as an inhibitor of CPSF3 endonuclease activity by blocking CPSF3 active site. In Rattus norvegicus (Rat), this protein is E3 ubiquitin-protein ligase E3D (Ube3d).